The sequence spans 311 residues: Mycinamicin-resistance protein MyrB (311 aa).

Positions 27, 29, 54, 75, and 98 each coordinate S-adenosyl-L-methionine. The interval 272-311 is disordered; it reads PAPAGRSVRARPGSVGPDRSLPPRGLRSGPPRARRRGGGA. Residues 293–302 are compositionally biased toward low complexity; that stretch reads PPRGLRSGPP.

The protein belongs to the class I-like SAM-binding methyltransferase superfamily. rRNA adenine N(6)-methyltransferase family.

In terms of biological role, confers resistance to macrolide, lincosamide and streptogramin B antibiotics. The chain is Mycinamicin-resistance protein MyrB (myrB) from Micromonospora griseorubida.